We begin with the raw amino-acid sequence, 635 residues long: Protein OPG056 (635 aa).

The protein belongs to the orthopoxvirus OPG056 family. As to quaternary structure, interacts with protein OPG164/A36. Interacts with protein OPG064/E2.

Its subcellular location is the virion membrane. It localises to the host endosome. Functionally, plays a role in intracellular enveloped virus (IEV) transport to the cell surface through microtubule transport. Together with protein OPG064/E2, forms a complex that interacts with host KLC2 (kinesin light chain isoform 2) to engage the kinesin-1 complex and thereby promote IEV trafficking. The protein is Protein OPG056 (OPG056) of Vaccinia virus (strain Western Reserve) (VACV).